The primary structure comprises 39 residues: Natriuretic peptide CnNP-a (39 aa).

A propeptide spanning residues Ser-1–Ile-8 is cleaved from the precursor. Cysteines 12 and 28 form a disulfide.

The protein belongs to the natriuretic peptide family. Expressed by the venom gland.

Its subcellular location is the secreted. Its function is as follows. Snake venom natriuretic peptide that targets both NPR1 and NPR2. Exhibits hypotensive and vasodepressor activities. This chain is Natriuretic peptide CnNP-a, found in Cryptophis nigrescens (Eastern small-eyed snake).